A 445-amino-acid chain; its full sequence is WD repeat domain phosphoinositide-interacting protein 2 (445 aa).

A WD 1 repeat occupies 182–222 (AHDSPLAALAFDASGTKLATASEKGTVIRVFSIPEGQKLFE). The short motif at 223-226 (FRRG) is the L/FRRG motif element. 2 WD repeats span residues 228-267 (KRCVSICSLAFSMDGMFLSASSNTETVHIFKLEAVREKPP) and 311-349 (GHKNICSLTTIQKIPRLLVGASDGYLYMYNLDPQEGGEC). At Ser395 the chain carries Phosphoserine.

The protein belongs to the WD repeat PROPPIN family. Interacts with TECPR1. Interacts with ATG16L1. Interacts with ATG5. Interacts with WIPI1. Interacts with WDR45. May interact with NUDC. Interacts with ULK1 and RB1CC1.

It localises to the preautophagosomal structure membrane. Functionally, component of the autophagy machinery that controls the major intracellular degradation process by which cytoplasmic materials are packaged into autophagosomes and delivered to lysosomes for degradation. Involved in an early step of the formation of preautophagosomal structures. Binds and is activated by phosphatidylinositol 3-phosphate (PtdIns3P) forming on membranes of the endoplasmic reticulum upon activation of the upstream ULK1 and PI3 kinases. Mediates ER-isolation membranes contacts by interacting with the ULK1:RB1CC1 complex and PtdIns3P. Once activated, WIPI2 recruits at phagophore assembly sites the ATG12-ATG5-ATG16L1 complex that directly controls the elongation of the nascent autophagosomal membrane. The protein is WD repeat domain phosphoinositide-interacting protein 2 of Mus musculus (Mouse).